The following is a 91-amino-acid chain: Small ribosomal subunit protein bS16 (91 aa).

Belongs to the bacterial ribosomal protein bS16 family.

The chain is Small ribosomal subunit protein bS16 from Limosilactobacillus reuteri (strain DSM 20016) (Lactobacillus reuteri).